The primary structure comprises 201 residues: Recombination protein RecR (201 aa).

The C4-type zinc-finger motif lies at 60–75 (CSRCGNVDTVDPCTVC). Residues 83-178 (SIIIVVEDVS…KITRLAHGVP (96 aa)) enclose the Toprim domain.

It belongs to the RecR family.

Its function is as follows. May play a role in DNA repair. It seems to be involved in an RecBC-independent recombinational process of DNA repair. It may act with RecF and RecO. This is Recombination protein RecR from Rhizobium leguminosarum bv. trifolii (strain WSM2304).